Here is a 293-residue protein sequence, read N- to C-terminus: Energy-coupling factor transporter ATP-binding protein EcfA2 (293 aa).

The 244-residue stretch at 3–246 (ITFQKVEHRY…ADELEKIGVD (244 aa)) folds into the ABC transporter domain. 40-47 (GHTGSGKS) serves as a coordination point for ATP.

This sequence belongs to the ABC transporter superfamily. Energy-coupling factor EcfA family. In terms of assembly, forms a stable energy-coupling factor (ECF) transporter complex composed of 2 membrane-embedded substrate-binding proteins (S component), 2 ATP-binding proteins (A component) and 2 transmembrane proteins (T component).

It localises to the cell membrane. Functionally, ATP-binding (A) component of a common energy-coupling factor (ECF) ABC-transporter complex. Unlike classic ABC transporters this ECF transporter provides the energy necessary to transport a number of different substrates. The chain is Energy-coupling factor transporter ATP-binding protein EcfA2 from Bacillus cereus (strain ATCC 10987 / NRS 248).